Here is a 107-residue protein sequence, read N- to C-terminus: Transmembrane protein 213 (107 aa).

Residues Met-1–Ala-27 form the signal peptide. The Extracellular segment spans residues Glu-28–Tyr-70. A helical membrane pass occupies residues Gly-71 to Val-91. Residues Asp-92–Ala-107 lie on the Cytoplasmic side of the membrane.

It localises to the membrane. This Homo sapiens (Human) protein is Transmembrane protein 213 (TMEM213).